The following is an 869-amino-acid chain: Valine--tRNA ligase (869 aa).

The 'HIGH' region signature appears at 47 to 57 (PYPTGNFHIGN). Residues 521–525 (KMSKS) carry the 'KMSKS' region motif. Lys524 serves as a coordination point for ATP.

This sequence belongs to the class-I aminoacyl-tRNA synthetase family. ValS type 2 subfamily.

It localises to the cytoplasm. It carries out the reaction tRNA(Val) + L-valine + ATP = L-valyl-tRNA(Val) + AMP + diphosphate. Functionally, catalyzes the attachment of valine to tRNA(Val). As ValRS can inadvertently accommodate and process structurally similar amino acids such as threonine, to avoid such errors, it has a 'posttransfer' editing activity that hydrolyzes mischarged Thr-tRNA(Val) in a tRNA-dependent manner. In Methanosarcina mazei (strain ATCC BAA-159 / DSM 3647 / Goe1 / Go1 / JCM 11833 / OCM 88) (Methanosarcina frisia), this protein is Valine--tRNA ligase.